A 269-amino-acid polypeptide reads, in one-letter code: Regulating synaptic membrane exocytosis protein 4 (269 aa).

A C2 domain is found at 115–233 (PMGDVEIGLQ…DLTTLAVGWY (119 aa)). 2 positions are modified to phosphoserine: Ser-254 and Ser-257.

Binds PPFIA3. Does not bind RAB3.

It is found in the synapse. In terms of biological role, regulates synaptic membrane exocytosis. The sequence is that of Regulating synaptic membrane exocytosis protein 4 (Rims4) from Mus musculus (Mouse).